We begin with the raw amino-acid sequence, 268 residues long: Tryptophan synthase alpha chain (268 aa).

Residues E49 and D60 each act as proton acceptor in the active site.

This sequence belongs to the TrpA family. In terms of assembly, tetramer of two alpha and two beta chains.

It catalyses the reaction (1S,2R)-1-C-(indol-3-yl)glycerol 3-phosphate + L-serine = D-glyceraldehyde 3-phosphate + L-tryptophan + H2O. It functions in the pathway amino-acid biosynthesis; L-tryptophan biosynthesis; L-tryptophan from chorismate: step 5/5. In terms of biological role, the alpha subunit is responsible for the aldol cleavage of indoleglycerol phosphate to indole and glyceraldehyde 3-phosphate. The sequence is that of Tryptophan synthase alpha chain from Escherichia coli (strain 55989 / EAEC).